Consider the following 600-residue polypeptide: NADH-quinone oxidoreductase subunit C/D (600 aa).

Positions 1–190 are NADH dehydrogenase I subunit C; the sequence is MIDLMPKKNT…EPFFLNEQKE (190 aa). The tract at residues 214-600 is NADH dehydrogenase I subunit D; sequence EFMFLNLGPN…IDFVMSDVDR (387 aa).

In the N-terminal section; belongs to the complex I 30 kDa subunit family. The protein in the C-terminal section; belongs to the complex I 49 kDa subunit family. NDH-1 is composed of 13 different subunits. Subunits NuoB, CD, E, F, and G constitute the peripheral sector of the complex.

It is found in the cell membrane. The enzyme catalyses a quinone + NADH + 5 H(+)(in) = a quinol + NAD(+) + 4 H(+)(out). NDH-1 shuttles electrons from NADH, via FMN and iron-sulfur (Fe-S) centers, to quinones in the respiratory chain. The immediate electron acceptor for the enzyme in this species is believed to be ubiquinone. Couples the redox reaction to proton translocation (for every two electrons transferred, four hydrogen ions are translocated across the cytoplasmic membrane), and thus conserves the redox energy in a proton gradient. This chain is NADH-quinone oxidoreductase subunit C/D, found in Buchnera aphidicola subsp. Acyrthosiphon pisum (strain 5A).